Consider the following 138-residue polypeptide: Histone H2A.Z (138 aa).

Residues 1–10 (MSSKVGGGKG) show a composition bias toward gly residues. The interval 1–21 (MSSKVGGGKGGKSKTSSEAKV) is disordered. N6-acetyllysine is present on residues lysine 4 and lysine 9.

The protein belongs to the histone H2A family. In terms of assembly, the nucleosome is a histone octamer containing two molecules each of H2A, H2B, H3 and H4 assembled in one H3-H4 heterotetramer and two H2A-H2B heterodimers. The octamer wraps approximately 147 bp of DNA. H2A or its variant H2A.Z forms a heterodimer with H2B. H2A.Z associates with the VPS72/SWC2 subunit of the SWR1 chromatin remodeling complex. Also interacts with RBP1/DNA-directed RNA polymerase II largest subunit. In terms of processing, acetylated once deposited into chromatin.

Its subcellular location is the nucleus. The protein resides in the chromosome. In terms of biological role, variant histone H2A which can replace H2A in some nucleosomes. Nucleosomes wrap and compact DNA into chromatin, limiting DNA accessibility to the cellular machineries which require DNA as a template. Histones thereby play a central role in transcription regulation, DNA repair, DNA replication and chromosomal stability. DNA accessibility is regulated via a complex set of post-translational modifications of histones, also called histone code, and nucleosome remodeling. This variant is enriched at promoters, it may keep them in a repressed state until the appropriate activation signal is received. Near telomeres, it may counteract gene silencing caused by the spread of heterochromatin proteins. Required for the RNA polymerase II and SPT15/TBP recruitment to the target genes. Involved in chromosome stability. The chain is Histone H2A.Z (HTZ1) from Cryptococcus neoformans var. neoformans serotype D (strain B-3501A) (Filobasidiella neoformans).